The sequence spans 425 residues: Serine--tRNA ligase (425 aa).

Residue 230 to 232 coordinates L-serine; sequence TSE. 261 to 263 contributes to the ATP binding site; sequence RKE. An L-serine-binding site is contributed by glutamate 284. 348–351 contributes to the ATP binding site; that stretch reads EISS. Residue serine 385 coordinates L-serine.

This sequence belongs to the class-II aminoacyl-tRNA synthetase family. Type-1 seryl-tRNA synthetase subfamily. As to quaternary structure, homodimer. The tRNA molecule binds across the dimer.

Its subcellular location is the cytoplasm. It catalyses the reaction tRNA(Ser) + L-serine + ATP = L-seryl-tRNA(Ser) + AMP + diphosphate + H(+). The enzyme catalyses tRNA(Sec) + L-serine + ATP = L-seryl-tRNA(Sec) + AMP + diphosphate + H(+). Its pathway is aminoacyl-tRNA biosynthesis; selenocysteinyl-tRNA(Sec) biosynthesis; L-seryl-tRNA(Sec) from L-serine and tRNA(Sec): step 1/1. Its function is as follows. Catalyzes the attachment of serine to tRNA(Ser). Is also able to aminoacylate tRNA(Sec) with serine, to form the misacylated tRNA L-seryl-tRNA(Sec), which will be further converted into selenocysteinyl-tRNA(Sec). The chain is Serine--tRNA ligase from Wolbachia pipientis wMel.